Consider the following 405-residue polypeptide: Tryptophan synthase beta chain (405 aa).

An N6-(pyridoxal phosphate)lysine modification is found at lysine 96.

The protein belongs to the TrpB family. In terms of assembly, tetramer of two alpha and two beta chains. It depends on pyridoxal 5'-phosphate as a cofactor.

It carries out the reaction (1S,2R)-1-C-(indol-3-yl)glycerol 3-phosphate + L-serine = D-glyceraldehyde 3-phosphate + L-tryptophan + H2O. It participates in amino-acid biosynthesis; L-tryptophan biosynthesis; L-tryptophan from chorismate: step 5/5. The beta subunit is responsible for the synthesis of L-tryptophan from indole and L-serine. In Clostridium botulinum (strain Eklund 17B / Type B), this protein is Tryptophan synthase beta chain.